Reading from the N-terminus, the 187-residue chain is Ribonuclease M5 (187 aa).

The 84-residue stretch at 5–88 (KEVIVVEGKD…AFLPRKAGVP (84 aa)) folds into the Toprim domain. Positions 11, 57, and 59 each coordinate Mg(2+).

This sequence belongs to the ribonuclease M5 family. Mg(2+) is required as a cofactor.

The protein localises to the cytoplasm. The enzyme catalyses Endonucleolytic cleavage of RNA, removing 21 and 42 nucleotides, respectively, from the 5'- and 3'-termini of a 5S-rRNA precursor.. Functionally, required for correct processing of both the 5' and 3' ends of 5S rRNA precursor. Cleaves both sides of a double-stranded region yielding mature 5S rRNA in one step. This is Ribonuclease M5 from Lactiplantibacillus plantarum (strain ATCC BAA-793 / NCIMB 8826 / WCFS1) (Lactobacillus plantarum).